A 250-amino-acid polypeptide reads, in one-letter code: DNA repair protein RecO (250 aa).

This sequence belongs to the RecO family.

In terms of biological role, involved in DNA repair and RecF pathway recombination. The polypeptide is DNA repair protein RecO (Rhodopseudomonas palustris (strain ATCC BAA-98 / CGA009)).